The chain runs to 81 residues: Relaxin-like protein AGF (81 aa).

Cystine bridges form between C14-C66, C26-C79, and C65-C70. N37 carries N-linked (GlcNAc...) asparagine glycosylation.

Belongs to the insulin family. Heterodimer of a B chain and an A chain linked by two disulfide bonds.

Its subcellular location is the secreted. Uncertain. The protein is Relaxin-like protein AGF of Hypanus sabinus (Atlantic stingray).